A 229-amino-acid polypeptide reads, in one-letter code: Wtf element wtf14 (229 aa).

Basic and acidic residues predominate over residues 1–26; it reads MENNHHLAKDSLDELNPKRGKGEHET. The interval 1–27 is disordered; that stretch reads MENNHHLAKDSLDELNPKRGKGEHETQ. Helical transmembrane passes span 71-91, 100-120, 151-171, and 188-208; these read IPAVLLPVFVINIALFKYLVF, VLFGLGNGGINIFSMWLLLAT, LYAILKLTFVNAFAIPLLMFF, and VIGVMLNVAYFIIEIENPGLF.

It belongs to the WTF family.

It localises to the endoplasmic reticulum membrane. Functionally, may act in meiotic drive. This Schizosaccharomyces pombe (strain 972 / ATCC 24843) (Fission yeast) protein is Wtf element wtf14.